The sequence spans 359 residues: Fructose-bisphosphate aldolase (359 aa).

Residue serine 50 participates in D-glyceraldehyde 3-phosphate binding. Catalysis depends on aspartate 83, which acts as the Proton donor. Positions 84, 105, 142, and 198 each coordinate Zn(2+). A dihydroxyacetone phosphate-binding site is contributed by glycine 199. Residue histidine 232 participates in Zn(2+) binding. Residues 233 to 235 (GSS) and 275 to 278 (NIDT) each bind dihydroxyacetone phosphate.

It belongs to the class II fructose-bisphosphate aldolase family. In terms of assembly, homodimer. Zn(2+) is required as a cofactor.

It catalyses the reaction beta-D-fructose 1,6-bisphosphate = D-glyceraldehyde 3-phosphate + dihydroxyacetone phosphate. Its pathway is carbohydrate biosynthesis; Calvin cycle. The protein operates within carbohydrate degradation; glycolysis; D-glyceraldehyde 3-phosphate and glycerone phosphate from D-glucose: step 4/4. Functionally, catalyzes the aldol condensation of dihydroxyacetone phosphate (DHAP or glycerone-phosphate) with glyceraldehyde 3-phosphate (G3P) to form fructose 1,6-bisphosphate (FBP) in gluconeogenesis and the reverse reaction in glycolysis. The polypeptide is Fructose-bisphosphate aldolase (cbbA) (Sinorhizobium medicae (strain WSM419) (Ensifer medicae)).